The chain runs to 227 residues: UPF0758 protein Dhaf_4352 (227 aa).

The 123-residue stretch at valine 105–leucine 227 folds into the MPN domain. Zn(2+) is bound by residues histidine 176, histidine 178, and aspartate 189. Residues histidine 176–aspartate 189 carry the JAMM motif motif.

Belongs to the UPF0758 family.

This is UPF0758 protein Dhaf_4352 from Desulfitobacterium hafniense (strain DSM 10664 / DCB-2).